The following is a 157-amino-acid chain: Endoribonuclease YbeY (157 aa).

Zn(2+) contacts are provided by H122, H126, and H132.

It belongs to the endoribonuclease YbeY family. Requires Zn(2+) as cofactor.

It is found in the cytoplasm. Single strand-specific metallo-endoribonuclease involved in late-stage 70S ribosome quality control and in maturation of the 3' terminus of the 16S rRNA. In Lysinibacillus sphaericus (strain C3-41), this protein is Endoribonuclease YbeY.